We begin with the raw amino-acid sequence, 399 residues long: Mitochondrial glycine transporter (399 aa).

3 Solcar repeats span residues 35-137 (IPPY…LRSV), 164-251 (LSTT…CKTN), and 266-374 (GNWM…GRSW). Transmembrane regions (helical) follow at residues 41-66 (LAFGALSGFASCVLLQPFDLLKTRLQ), 112-138 (GTAPTVIRNVPGVALYFYSVSHLRSVA), 170-195 (LLTGAVARVTVGFILSPVTVVKARFE), 226-249 (GFTATALRDAPYAGLYLALYEACK), 270-296 (VVSASGLLAGTLATLLTHPFDIIKTRM), and 349-367 (GLGLRCARKAASSAIGWSI). The disordered stretch occupies residues 379–399 (EASSSAQEAGTGTRLLDHKQV).

The protein belongs to the mitochondrial carrier (TC 2.A.29) family. SLC25A38 subfamily.

It localises to the mitochondrion inner membrane. It carries out the reaction glycine(in) = glycine(out). Functionally, mitochondrial glycine transporter that imports glycine into the mitochondrial matrix. Plays an important role in providing glycine for the first enzymatic step in heme biosynthesis, the condensation of glycine with succinyl-CoA to produce 5-aminolevulinate (ALA) in the mitochondrial matrix. In Mycosarcoma maydis (Corn smut fungus), this protein is Mitochondrial glycine transporter.